Here is a 375-residue protein sequence, read N- to C-terminus: POU domain, class 3, transcription factor 1-B (375 aa).

Disordered regions lie at residues 1–29 (MAAT…RMHQ), 56–139 (MSLT…QPLI), and 151–200 (MLGP…PSSD). 3 stretches are compositionally biased toward polar residues: residues 107 to 117 (VHQQTPSSHAW), 129 to 139 (SPGSNSHQPLI), and 151 to 160 (MLGPQASSLH). Residues 162–178 (SMRDPLHDDPGVHDTHV) show a composition bias toward basic and acidic residues. One can recognise a POU-specific domain in the interval 194–268 (EDAPSSDDLE…LLNKWLEETD (75 aa)). A DNA-binding region (homeobox) is located at residues 286–345 (KRKKRTSIEVGVKGALENHFLKCPKPSAHEITSLADSLQLEKEVVRVWFCNRRQKEKRMT).

Belongs to the POU transcription factor family. Class-3 subfamily.

The protein resides in the nucleus. Its function is as follows. Acts as a transcription factor. May play a role in neuronal differentiation. In Xenopus laevis (African clawed frog), this protein is POU domain, class 3, transcription factor 1-B (pou3f1-b).